We begin with the raw amino-acid sequence, 192 residues long: MEYRSLTLDDFLSRFQLLRPQINRETLNHRQAAVLIPIVRRPQPGLLLTQRSIHLRKHAGQVAFPGGAVDDTDASVIAAALREAEEEVAIPPSTVEVIGVLPPVDSVTGYQVTPVVGIIPPDLPYRASEDEVSAVFEMPLAQALHLGRYHPLDIYRRGDSHRVWLSWYEQYFVWGMTAGIIRELALQIGVKP.

The 132-residue stretch at 29 to 160 (HRQAAVLIPI…PLDIYRRGDS (132 aa)) folds into the Nudix hydrolase domain. A Nudix box motif is present at residues 67-89 (GAVDDTDASVIAAALREAEEEVA). Mg(2+)-binding residues include E83 and E87.

This sequence belongs to the Nudix hydrolase family. PCD1 subfamily. Mn(2+) is required as a cofactor. Mg(2+) serves as cofactor.

In terms of biological role, probably mediates the hydrolysis of some nucleoside diphosphate derivatives. This is an uncharacterized protein from Escherichia coli (strain SMS-3-5 / SECEC).